Here is a 357-residue protein sequence, read N- to C-terminus: Alanine racemase (357 aa).

The Proton acceptor; specific for D-alanine role is filled by Lys33. Lys33 carries the post-translational modification N6-(pyridoxal phosphate)lysine. Arg129 is a binding site for substrate. Tyr253 (proton acceptor; specific for L-alanine) is an active-site residue. Met301 is a binding site for substrate.

This sequence belongs to the alanine racemase family. Pyridoxal 5'-phosphate is required as a cofactor.

The catalysed reaction is L-alanine = D-alanine. The protein operates within amino-acid biosynthesis; D-alanine biosynthesis; D-alanine from L-alanine: step 1/1. Catalyzes the interconversion of L-alanine and D-alanine. May also act on other amino acids. The sequence is that of Alanine racemase (alr) from Pseudomonas fluorescens (strain ATCC BAA-477 / NRRL B-23932 / Pf-5).